A 195-amino-acid chain; its full sequence is MPKLGMQSIRRRQLIDATLEAINEVGMHDATIAQIARRAGVSTGIISHYFRDKNGLLEATMRDITSQLRDAVLNRLHALPQGSAEQRLQAIVGGNFDETQVSSAAMKAWLAFWASSMHQPMLYRLQQVSSRRLLSNLVSEFHRELPRQQAQEAGYGLAALIDGLWLRAALSGKPLDKPLAHSLTRHFITQHLPTD.

The HTH tetR-type domain maps to 8–68 (SIRRRQLIDA…ATMRDITSQL (61 aa)). The segment at residues 31–50 (TIAQIARRAGVSTGIISHYF) is a DNA-binding region (H-T-H motif).

Its pathway is amine and polyamine biosynthesis; betaine biosynthesis via choline pathway [regulation]. Its function is as follows. Repressor involved in the biosynthesis of the osmoprotectant glycine betaine. It represses transcription of the choline transporter BetT and the genes of BetAB involved in the synthesis of glycine betaine. The polypeptide is HTH-type transcriptional regulator BetI (Escherichia coli (strain SMS-3-5 / SECEC)).